The chain runs to 338 residues: tRNA N6-adenosine threonylcarbamoyltransferase (338 aa).

Fe cation-binding residues include His-114 and His-118. Substrate contacts are provided by residues 136-140 (LVSGG), Asp-169, Gly-182, Asp-186, and Asn-275. Asp-301 contacts Fe cation.

This sequence belongs to the KAE1 / TsaD family. Fe(2+) is required as a cofactor.

Its subcellular location is the cytoplasm. It catalyses the reaction L-threonylcarbamoyladenylate + adenosine(37) in tRNA = N(6)-L-threonylcarbamoyladenosine(37) in tRNA + AMP + H(+). Its function is as follows. Required for the formation of a threonylcarbamoyl group on adenosine at position 37 (t(6)A37) in tRNAs that read codons beginning with adenine. Is involved in the transfer of the threonylcarbamoyl moiety of threonylcarbamoyl-AMP (TC-AMP) to the N6 group of A37, together with TsaE and TsaB. TsaD likely plays a direct catalytic role in this reaction. In Streptococcus equi subsp. zooepidemicus (strain MGCS10565), this protein is tRNA N6-adenosine threonylcarbamoyltransferase.